Consider the following 571-residue polypeptide: Hemagglutinin-neuraminidase (571 aa).

The Intravirion portion of the chain corresponds to 1 to 25; the sequence is MEDYSNLSLKSIPKRTCRIIFRTAT. The chain crosses the membrane as a helical span at residues 26-46; that stretch reads ILGICTLIVLCSSILHEIIHL. At 47–571 the chain is on the virion surface side; that stretch reads DVSSGLMDSD…IIPFLRELIP (525 aa). Disulfide bonds link cysteine 166/cysteine 190, cysteine 180/cysteine 241, and cysteine 232/cysteine 245. Residues 228–233 are important for neuraminidase activity; that stretch reads NRKSCS. The segment at 228–233 is involved in neuraminidase activity; the sequence is NRKSCS. Residues asparagine 272, asparagine 284, asparagine 335, and asparagine 341 are each glycosylated (N-linked (GlcNAc...) asparagine; by host). 3 disulfides stabilise this stretch: cysteine 338/cysteine 459, cysteine 370/cysteine 380, and cysteine 453/cysteine 463. A glycan (N-linked (GlcNAc...) asparagine; by host) is linked at asparagine 386. The segment at 393–398 is sialic receptor-binding site; it reads GAEGRL. N-linked (GlcNAc...) asparagine; by host glycosylation is found at asparagine 454, asparagine 498, asparagine 501, asparagine 517, and asparagine 522. The cysteines at positions 535 and 546 are disulfide-linked.

It belongs to the paramyxoviruses hemagglutinin-neuraminidase family. In terms of assembly, homotetramer; composed of disulfide-linked homodimers. Interacts with F protein trimer.

The protein localises to the virion membrane. The protein resides in the host cell membrane. It carries out the reaction Hydrolysis of alpha-(2-&gt;3)-, alpha-(2-&gt;6)-, alpha-(2-&gt;8)- glycosidic linkages of terminal sialic acid residues in oligosaccharides, glycoproteins, glycolipids, colominic acid and synthetic substrates.. In terms of biological role, attaches the virus to sialic acid-containing cell receptors and thereby initiating infection. Binding of HN protein to the receptor induces a conformational change that allows the F protein to trigger virion/cell membranes fusion. Neuraminidase activity ensures the efficient spread of the virus by dissociating the mature virions from the neuraminic acid containing glycoproteins. The chain is Hemagglutinin-neuraminidase (HN) from Human parainfluenza 2 virus (strain Toshiba) (HPIV-2).